The primary structure comprises 204 residues: Large ribosomal subunit protein uL18 (204 aa).

The protein belongs to the universal ribosomal protein uL18 family. Part of the 50S ribosomal subunit. Contacts the 5S and 23S rRNAs.

This is one of the proteins that bind and probably mediate the attachment of the 5S RNA into the large ribosomal subunit, where it forms part of the central protuberance. The polypeptide is Large ribosomal subunit protein uL18 (Ignicoccus hospitalis (strain KIN4/I / DSM 18386 / JCM 14125)).